We begin with the raw amino-acid sequence, 248 residues long: Floral homeotic protein AGAMOUS (248 aa).

The region spanning 19 to 73 (RGKIEIKRIENTTNRQVTFCKRRNGLLKKAYELSVLCDAEVALIVFSSRGRLYEY) is the MADS-box domain. One can recognise a K-box domain in the interval 103–193 (AQYYQQEASK…RAKIAETERA (91 aa)). The disordered stretch occupies residues 196-219 (QQQQQQMNLMPGSSSYELVPPPHQ). A compositionally biased stretch (polar residues) spans 202 to 211 (MNLMPGSSSY).

It localises to the nucleus. In terms of biological role, probable transcription factor involved in regulating genes that determines stamen and carpel development in wild-type flowers. The protein is Floral homeotic protein AGAMOUS (AG1) of Nicotiana tabacum (Common tobacco).